Consider the following 544-residue polypeptide: Chaperonin GroEL (544 aa).

Residues 29–32 (TLGP), 86–90 (DGTTT), Gly413, 476–478 (NAL), and Asp492 each bind ATP.

The protein belongs to the chaperonin (HSP60) family. In terms of assembly, forms a cylinder of 14 subunits composed of two heptameric rings stacked back-to-back. Interacts with the co-chaperonin GroES.

The protein localises to the cytoplasm. The catalysed reaction is ATP + H2O + a folded polypeptide = ADP + phosphate + an unfolded polypeptide.. Together with its co-chaperonin GroES, plays an essential role in assisting protein folding. The GroEL-GroES system forms a nano-cage that allows encapsulation of the non-native substrate proteins and provides a physical environment optimized to promote and accelerate protein folding. In Desulfitobacterium hafniense (strain DSM 10664 / DCB-2), this protein is Chaperonin GroEL.